Consider the following 330-residue polypeptide: Ketol-acid reductoisomerase (NADP(+)) (330 aa).

In terms of domain architecture, KARI N-terminal Rossmann spans 1 to 181 (MNAYYEQDAD…GGTKAGVIET (181 aa)). NADP(+) is bound by residues 24-27 (FGSQ), Arg-47, Ser-50, Ser-52, and 82-85 (DQYQ). His-107 is a catalytic residue. Gly-133 is an NADP(+) binding site. In terms of domain architecture, KARI C-terminal knotted spans 182–327 (TFKNETETDL…AKLRDMMSWL (146 aa)). Mg(2+) contacts are provided by Asp-190, Glu-194, Glu-226, and Glu-230. Substrate is bound at residue Ser-251.

This sequence belongs to the ketol-acid reductoisomerase family. Mg(2+) serves as cofactor.

It carries out the reaction (2R)-2,3-dihydroxy-3-methylbutanoate + NADP(+) = (2S)-2-acetolactate + NADPH + H(+). It catalyses the reaction (2R,3R)-2,3-dihydroxy-3-methylpentanoate + NADP(+) = (S)-2-ethyl-2-hydroxy-3-oxobutanoate + NADPH + H(+). It participates in amino-acid biosynthesis; L-isoleucine biosynthesis; L-isoleucine from 2-oxobutanoate: step 2/4. The protein operates within amino-acid biosynthesis; L-valine biosynthesis; L-valine from pyruvate: step 2/4. In terms of biological role, involved in the biosynthesis of branched-chain amino acids (BCAA). Catalyzes an alkyl-migration followed by a ketol-acid reduction of (S)-2-acetolactate (S2AL) to yield (R)-2,3-dihydroxy-isovalerate. In the isomerase reaction, S2AL is rearranged via a Mg-dependent methyl migration to produce 3-hydroxy-3-methyl-2-ketobutyrate (HMKB). In the reductase reaction, this 2-ketoacid undergoes a metal-dependent reduction by NADPH to yield (R)-2,3-dihydroxy-isovalerate. The sequence is that of Ketol-acid reductoisomerase (NADP(+)) from Chlorobium phaeobacteroides (strain BS1).